Consider the following 210-residue polypeptide: Large ribosomal subunit protein uL3 (210 aa).

Belongs to the universal ribosomal protein uL3 family. As to quaternary structure, part of the 50S ribosomal subunit. Forms a cluster with proteins L14 and L19.

One of the primary rRNA binding proteins, it binds directly near the 3'-end of the 23S rRNA, where it nucleates assembly of the 50S subunit. In Pediococcus pentosaceus (strain ATCC 25745 / CCUG 21536 / LMG 10740 / 183-1w), this protein is Large ribosomal subunit protein uL3.